A 641-amino-acid polypeptide reads, in one-letter code: Peroxisomal targeting signal 1 receptor (641 aa).

Residue cysteine 12 forms a Glycyl cysteine thioester (Cys-Gly) (interchain with G-Cter in ubiquitin) linkage. The interval 12–34 (CSEPNALGNFVQHFTNERSYHDK) is amphipathic helix 1 (AH1). The tract at residues 74-92 (HLMMDRHLNLRDGPREHKE) is amphipathic helix 2 (AH2). Residues 261–288 (VEAAWDETARRTISDITRPITQINDPKL) form an amphipathic helix 4 (AH4) region. The WxxxF/Y motif motif lies at 331-335 (WTEDY). 6 TPR repeats span residues 359 to 392 (DSDTLERGMGLFNEGHLSDSIIALESEVKRNPEN), 393 to 426 (AMAWMYLGIAHAENDQDSQATTCLIKSLQIDPTN), 427 to 460 (SKARLALAVSHTNDYQKERALDTLEEWLQRTPEY), 503 to 536 (PEVQTALGLLYNMSYDYDKAVDCFKAALQNSPTD), 538 to 570 (QLWNKLGATLANSNRSQEALGAYFKALEHKPSY), and 571 to 604 (VRARSNLGISYLSLNMFQESATTFLGAIAIHPAP).

The protein belongs to the peroxisomal targeting signal receptor family. In terms of assembly, interacts (via WxxxF/Y and LVxEF motifs) with PEX14; promoting translocation through the PEX13-PEX14 docking complex. Interacts with PEX7, promoting peroxisomal import of proteins containing a C-terminal PTS2-type peroxisomal targeting signal. Monoubiquitinated at Cys-12 by PEX2 during PEX5 passage through the retrotranslocation channel. Cys-12 monoubiquitination acts as a recognition signal for the PEX1-PEX6 complex and is required for PEX5 extraction and export from peroxisomes. When PEX5 recycling is compromised, polyubiquitinated by PEX10 during its passage through the retrotranslocation channel, leading to its degradation.

The protein localises to the cytoplasm. It is found in the cytosol. The protein resides in the peroxisome matrix. Functionally, receptor that mediates peroxisomal import of proteins containing a C-terminal PTS1-type tripeptide peroxisomal targeting signal (SKL-type). Binds to cargo proteins containing a PTS1 peroxisomal targeting signal in the cytosol, and translocates them into the peroxisome matrix by passing through the PEX13-PEX14 docking complex along with cargo proteins. PEX5 receptor is then retrotranslocated into the cytosol, leading to release of bound cargo in the peroxisome matrix, and reset for a subsequent peroxisome import cycle. Its function is as follows. In addition to promoting peroxisomal translocation of proteins containing a PTS1 peroxisomal targeting signal, mediates peroxisomal import of proteins containing a C-terminal PTS2-type peroxisomal targeting signal via its interaction with PEX7. Interaction with PEX7 only takes place when PEX7 is associated with cargo proteins containing a PTS2 peroxisomal targeting signal. PEX7 along with PTS2-containing cargo proteins are then translocated through the PEX13-PEX14 docking complex together with PEX5. The protein is Peroxisomal targeting signal 1 receptor (pex5) of Dictyostelium discoideum (Social amoeba).